The primary structure comprises 228 residues: Interferon-induced transmembrane protein 10 (228 aa).

At 1 to 154 the chain is on the extracellular side; sequence MREGKRGPPC…PDTTEVNDYY (154 aa). Residues 29 to 49 are disordered; sequence AQGPGQCPAPLGDPASTTDGA. The helical transmembrane segment at 155 to 175 threads the bilayer; that stretch reads LWSIFNFVYLNFCCLGFIALA. S-palmitoyl cysteine attachment occurs at residues Cys-167 and Cys-168. Topologically, residues 176–200 are cytoplasmic; that stretch reads YSLKVRDKKLLNDLNGAVEDAKTAR. The chain crosses the membrane as a helical span at residues 201 to 221; sequence LFNITSSALAASCIILVFIFL. Topologically, residues 222–228 are extracellular; it reads RYPLTDY.

It belongs to the CD225/Dispanin family.

It localises to the cell membrane. This chain is Interferon-induced transmembrane protein 10 (IFITM10), found in Homo sapiens (Human).